A 280-amino-acid polypeptide reads, in one-letter code: Acyl-[acyl-carrier-protein]--UDP-N-acetylglucosamine O-acyltransferase (280 aa).

It belongs to the transferase hexapeptide repeat family. LpxA subfamily. As to quaternary structure, homotrimer.

Its subcellular location is the cytoplasm. It catalyses the reaction a (3R)-hydroxyacyl-[ACP] + UDP-N-acetyl-alpha-D-glucosamine = a UDP-3-O-[(3R)-3-hydroxyacyl]-N-acetyl-alpha-D-glucosamine + holo-[ACP]. It participates in glycolipid biosynthesis; lipid IV(A) biosynthesis; lipid IV(A) from (3R)-3-hydroxytetradecanoyl-[acyl-carrier-protein] and UDP-N-acetyl-alpha-D-glucosamine: step 1/6. Its function is as follows. Involved in the biosynthesis of lipid A, a phosphorylated glycolipid that anchors the lipopolysaccharide to the outer membrane of the cell. This is Acyl-[acyl-carrier-protein]--UDP-N-acetylglucosamine O-acyltransferase from Chlamydia trachomatis serovar L2 (strain ATCC VR-902B / DSM 19102 / 434/Bu).